A 193-amino-acid polypeptide reads, in one-letter code: Flagellar transcriptional regulator FlhC (193 aa).

C137, C140, C158, and C161 together coordinate Zn(2+).

It belongs to the FlhC family. Heterohexamer composed of two FlhC and four FlhD subunits. Each FlhC binds a FlhD dimer, forming a heterotrimer, and a hexamer assembles by dimerization of two heterotrimers. It depends on Zn(2+) as a cofactor.

It localises to the cytoplasm. In terms of biological role, functions in complex with FlhD as a master transcriptional regulator that regulates transcription of several flagellar and non-flagellar operons by binding to their promoter region. Activates expression of class 2 flagellar genes, including fliA, which is a flagellum-specific sigma factor that turns on the class 3 genes. Also regulates genes whose products function in a variety of physiological pathways. In Pectobacterium carotovorum (Erwinia carotovora), this protein is Flagellar transcriptional regulator FlhC.